Reading from the N-terminus, the 409-residue chain is Divalent metal cation transporter MntH (409 aa).

11 helical membrane-spanning segments follow: residues 19–39 (LSLMGPAFIAAIAYIDPGNFA), 46–66 (ATFGYTLLWVVVWANVMAMLV), 98–118 (WVQAEIIVMATDLAEFIGAAI), 122–142 (LLFGVTLLQGAVLTGIATFLI), 155–175 (LVIGGLLLFVAAAYIVELIFS), 196–216 (AVFLAAGVLGATIMPHVIYLH), 241–261 (IAMTIAGFVNLAMMATAAAAF), 290–310 (VFGLSLIAAGLSSTVVGTLAG), 320–340 (FYIPMWVRRIVTMLPSFIVIL), 348–368 (ILVMSQVLLSFGIALALVPLL), and 388–408 (ILGKLVVLIVVGLNAYLLISL).

This sequence belongs to the NRAMP family.

It localises to the cell inner membrane. In terms of biological role, h(+)-stimulated, divalent metal cation uptake system. This Yersinia pseudotuberculosis serotype O:1b (strain IP 31758) protein is Divalent metal cation transporter MntH.